The sequence spans 461 residues: Demethyllactenocin mycarosyltransferase (461 aa).

The segment at 1-21 (MAGLRPGAGVPPGTPWPISPG) is disordered.

The protein belongs to the UDP-glycosyltransferase family.

The enzyme catalyses dTDP-beta-L-mycarose + demethyllactenocin = demethylmacrocin + dTDP + H(+). Functionally, involved in the biosynthesis of mycarose which is a 6-deoxyhexose sugar required during production of the macrolide antibiotic tylosin. Catalyzes the transfer of L-mycarosyl from dTDP-beta-L-mycarose to demethyllactenocin to yield demethylmacrocin. The sequence is that of Demethyllactenocin mycarosyltransferase (tylCV) from Streptomyces fradiae (Streptomyces roseoflavus).